Consider the following 164-residue polypeptide: Putative 4-hydroxy-4-methyl-2-oxoglutarate aldolase (164 aa).

Substrate-binding positions include 80–83 and arginine 102; that span reads GGNL. Position 103 (aspartate 103) interacts with a divalent metal cation.

The protein belongs to the class II aldolase/RraA-like family. In terms of assembly, homotrimer. A divalent metal cation serves as cofactor.

It catalyses the reaction 4-hydroxy-4-methyl-2-oxoglutarate = 2 pyruvate. The enzyme catalyses oxaloacetate + H(+) = pyruvate + CO2. Catalyzes the aldol cleavage of 4-hydroxy-4-methyl-2-oxoglutarate (HMG) into 2 molecules of pyruvate. Also contains a secondary oxaloacetate (OAA) decarboxylase activity due to the common pyruvate enolate transition state formed following C-C bond cleavage in the retro-aldol and decarboxylation reactions. This Paraburkholderia phymatum (strain DSM 17167 / CIP 108236 / LMG 21445 / STM815) (Burkholderia phymatum) protein is Putative 4-hydroxy-4-methyl-2-oxoglutarate aldolase.